The primary structure comprises 352 residues: Phosphate acyltransferase (352 aa).

This sequence belongs to the PlsX family. Homodimer. Probably interacts with PlsY.

It is found in the cytoplasm. It catalyses the reaction a fatty acyl-[ACP] + phosphate = an acyl phosphate + holo-[ACP]. The protein operates within lipid metabolism; phospholipid metabolism. Its function is as follows. Catalyzes the reversible formation of acyl-phosphate (acyl-PO(4)) from acyl-[acyl-carrier-protein] (acyl-ACP). This enzyme utilizes acyl-ACP as fatty acyl donor, but not acyl-CoA. This chain is Phosphate acyltransferase, found in Brucella anthropi (strain ATCC 49188 / DSM 6882 / CCUG 24695 / JCM 21032 / LMG 3331 / NBRC 15819 / NCTC 12168 / Alc 37) (Ochrobactrum anthropi).